Consider the following 430-residue polypeptide: C4-dicarboxylate transport protein (430 aa).

The next 9 membrane-spanning stretches (helical) occupy residues 8 to 28 (SLYF…HFYP), 44 to 64 (LIKM…IAGM), 76 to 96 (IALL…LVIV), 144 to 164 (AFAS…GFAL), 184 to 204 (VIFG…FGAM), 222 to 242 (LIIC…GSIA), 289 to 309 (VVGL…SIYL), 326 to 346 (VIHQ…AAGV), and 352 to 372 (IVLA…LALI).

Belongs to the dicarboxylate/amino acid:cation symporter (DAACS) (TC 2.A.23) family.

Its subcellular location is the cell inner membrane. Responsible for the transport of dicarboxylates such as succinate, fumarate, and malate from the periplasm across the membrane. The chain is C4-dicarboxylate transport protein from Yersinia enterocolitica serotype O:8 / biotype 1B (strain NCTC 13174 / 8081).